Here is a 309-residue protein sequence, read N- to C-terminus: Heme-dependent oxidative N-demethylase beta subunit (309 aa).

One can recognise an FAD-binding FR-type domain in the interval 2–103; sequence STLLDVRVAA…SPPANLFPLH (102 aa). Positions 226–309 constitute a 2Fe-2S ferredoxin-type domain; it reads FRVELARSGQ…GCGSPILLDL (84 aa). The [2Fe-2S] cluster site is built by C260, C265, C268, and C296.

The protein belongs to the PDR/VanB family. As to quaternary structure, the heme-dependent oxidative N-demethylase (HODM) is a heterotetramer composed of a catalytic alpha subunit, a FMN/2Fe-2S-dependent oxidoreductase beta subunit, a gamma subunit with putative aminotransferase activity, and a delta subunit of unknown function. [2Fe-2S] cluster is required as a cofactor. The cofactor is FMN.

Its function is as follows. Component of the heme-dependent oxidative N-demethylase (HODM) enzyme, that catalyzes the NADPH-dependent oxidation of dimethylamine (DMA) to methylamine (MA) and formaldehyde. Functions in bacterial methylated amine catabolism, linking alkylamine oxidation to the tetrahydrofolate C1 pool. The beta subunit of HODM binds FMN and a 2Fe-2S cluster, and likely reduces the ferric heme iron of the alpha subunit to ferrous using NADPH. The chain is Heme-dependent oxidative N-demethylase beta subunit from Ectopseudomonas mendocina (strain ymp) (Pseudomonas mendocina).